A 341-amino-acid chain; its full sequence is S-adenosylmethionine:tRNA ribosyltransferase-isomerase (341 aa).

It belongs to the QueA family. As to quaternary structure, monomer.

Its subcellular location is the cytoplasm. The catalysed reaction is 7-aminomethyl-7-carbaguanosine(34) in tRNA + S-adenosyl-L-methionine = epoxyqueuosine(34) in tRNA + adenine + L-methionine + 2 H(+). It participates in tRNA modification; tRNA-queuosine biosynthesis. Its function is as follows. Transfers and isomerizes the ribose moiety from AdoMet to the 7-aminomethyl group of 7-deazaguanine (preQ1-tRNA) to give epoxyqueuosine (oQ-tRNA). In Clostridium tetani (strain Massachusetts / E88), this protein is S-adenosylmethionine:tRNA ribosyltransferase-isomerase.